Reading from the N-terminus, the 148-residue chain is Endoribonuclease YbeY (148 aa).

Zn(2+) is bound by residues H112, H116, and H122.

The protein belongs to the endoribonuclease YbeY family. It depends on Zn(2+) as a cofactor.

It is found in the cytoplasm. Its function is as follows. Single strand-specific metallo-endoribonuclease involved in late-stage 70S ribosome quality control and in maturation of the 3' terminus of the 16S rRNA. This is Endoribonuclease YbeY from Albidiferax ferrireducens (strain ATCC BAA-621 / DSM 15236 / T118) (Rhodoferax ferrireducens).